Here is a 69-residue protein sequence, read N- to C-terminus: DNA gyrase inhibitor YacG (69 aa).

The interval Met1 to Ser28 is disordered. 4 residues coordinate Zn(2+): Cys21, Cys24, Cys36, and Cys40.

Belongs to the DNA gyrase inhibitor YacG family. Interacts with GyrB. The cofactor is Zn(2+).

In terms of biological role, inhibits all the catalytic activities of DNA gyrase by preventing its interaction with DNA. Acts by binding directly to the C-terminal domain of GyrB, which probably disrupts DNA binding by the gyrase. The protein is DNA gyrase inhibitor YacG of Sinorhizobium fredii (strain NBRC 101917 / NGR234).